We begin with the raw amino-acid sequence, 369 residues long: Anhydro-N-acetylmuramic acid kinase (369 aa).

12–19 contacts ATP; sequence GTSMDGVD.

This sequence belongs to the anhydro-N-acetylmuramic acid kinase family.

The enzyme catalyses 1,6-anhydro-N-acetyl-beta-muramate + ATP + H2O = N-acetyl-D-muramate 6-phosphate + ADP + H(+). It participates in amino-sugar metabolism; 1,6-anhydro-N-acetylmuramate degradation. The protein operates within cell wall biogenesis; peptidoglycan recycling. In terms of biological role, catalyzes the specific phosphorylation of 1,6-anhydro-N-acetylmuramic acid (anhMurNAc) with the simultaneous cleavage of the 1,6-anhydro ring, generating MurNAc-6-P. Is required for the utilization of anhMurNAc either imported from the medium or derived from its own cell wall murein, and thus plays a role in cell wall recycling. This chain is Anhydro-N-acetylmuramic acid kinase, found in Shewanella baltica (strain OS155 / ATCC BAA-1091).